A 363-amino-acid polypeptide reads, in one-letter code: Ribosomal RNA large subunit methyltransferase M (363 aa).

Residues Ser-190, 223–226 (CPGG), Asp-242, Asp-262, and Asp-280 each bind S-adenosyl-L-methionine. The active-site Proton acceptor is the Lys-309.

This sequence belongs to the class I-like SAM-binding methyltransferase superfamily. RNA methyltransferase RlmE family. RlmM subfamily. As to quaternary structure, monomer.

Its subcellular location is the cytoplasm. The catalysed reaction is cytidine(2498) in 23S rRNA + S-adenosyl-L-methionine = 2'-O-methylcytidine(2498) in 23S rRNA + S-adenosyl-L-homocysteine + H(+). Catalyzes the 2'-O-methylation at nucleotide C2498 in 23S rRNA. The protein is Ribosomal RNA large subunit methyltransferase M of Actinobacillus pleuropneumoniae serotype 5b (strain L20).